Consider the following 237-residue polypeptide: Orotate phosphoribosyltransferase (237 aa).

A 5-phospho-alpha-D-ribose 1-diphosphate-binding site is contributed by Lys-29. 37–38 (FF) serves as a coordination point for orotate. 5-phospho-alpha-D-ribose 1-diphosphate contacts are provided by residues 79 to 80 (YK), Arg-105, Lys-106, Lys-109, His-111, and 130 to 138 (DDVMSAGTA). Orotate-binding residues include Ser-134 and Arg-162.

This sequence belongs to the purine/pyrimidine phosphoribosyltransferase family. PyrE subfamily. Homodimer. It depends on Mg(2+) as a cofactor.

It carries out the reaction orotidine 5'-phosphate + diphosphate = orotate + 5-phospho-alpha-D-ribose 1-diphosphate. It participates in pyrimidine metabolism; UMP biosynthesis via de novo pathway; UMP from orotate: step 1/2. In terms of biological role, catalyzes the transfer of a ribosyl phosphate group from 5-phosphoribose 1-diphosphate to orotate, leading to the formation of orotidine monophosphate (OMP). The sequence is that of Orotate phosphoribosyltransferase from Polaromonas naphthalenivorans (strain CJ2).